Here is a 406-residue protein sequence, read N- to C-terminus: Biofilm regulatory protein A (406 aa).

The first 26 residues, 1 to 26, serve as a signal peptide directing secretion; the sequence is MKIGKKILIMLVTIFLTSLVALGVYA. Positions 347-397 are enriched in low complexity; that stretch reads SSSASDYSSSGNYSGSSSDYGSSSSYGSNSSSGSSSDYSGQNSYNQGNYQQ. The tract at residues 347–406 is disordered; that stretch reads SSSASDYSSSGNYSGSSSDYGSSSSYGSNSSSGSSSDYSGQNSYNQGNYQQPAAGTGIGN.

This sequence belongs to the LytR/CpsA/Psr (LCP) family.

The protein resides in the cell envelope. Involved in biofilm formation, cell division, autolysis and the regulation of acid and oxidative stress tolerance. May be associated with systemic virulence in blood. This chain is Biofilm regulatory protein A (brpA), found in Streptococcus mutans serotype c (strain ATCC 700610 / UA159).